Here is a 376-residue protein sequence, read N- to C-terminus: Phytanoyl-CoA hydroxylase-interacting protein-like (376 aa).

Phosphoserine is present on residues Ser-12 and Ser-15. Asn-23 carries an N-linked (GlcNAc...) asparagine glycan. Position 25 is a phosphoserine (Ser-25). A glycan (N-linked (GlcNAc...) asparagine) is linked at Asn-37. The 110-residue stretch at 52–161 (VPHNIKISNI…EIIEFCTADY (110 aa)) folds into the Fibronectin type-III domain.

It belongs to the PHYHIP family.

May play a role in the development of the central system. In Homo sapiens (Human), this protein is Phytanoyl-CoA hydroxylase-interacting protein-like (PHYHIPL).